The following is a 311-amino-acid chain: MKPTTIFLMGPTASGKTDLAIQLRSSLPVEVISVDSALIYKGMDIGTAKPSKEELALAPHRLIDILDPSESYSAMNFRDDALREMADITAQGKIPLLVGGTMLYYKALIEGLSPLPSADENIRAELEQKAAQQGWAALHTELAKIDPMSAARINPSDSQRINRALEVFYITGKSLTELTEEKGEALPYDFVQFAIAPQDRHVLHERIEQRFHKMIELGFQEEVEKLYTRGDLNINLPSIRCVGYRQMWEYLQGDYDHEEMIFRGICATRQLAKRQLTWLRGWKTPIQWLDSLQPQQAKETVLRHLDSYQKG.

10-17 contacts ATP; it reads GPTASGKT. 12–17 contacts substrate; sequence TASGKT. Interaction with substrate tRNA stretches follow at residues 35-38, 159-163, and 240-245; these read DSAL, QRINR, and RCVGYR.

It belongs to the IPP transferase family. Monomer. Mg(2+) is required as a cofactor.

The catalysed reaction is adenosine(37) in tRNA + dimethylallyl diphosphate = N(6)-dimethylallyladenosine(37) in tRNA + diphosphate. In terms of biological role, catalyzes the transfer of a dimethylallyl group onto the adenine at position 37 in tRNAs that read codons beginning with uridine, leading to the formation of N6-(dimethylallyl)adenosine (i(6)A). The sequence is that of tRNA dimethylallyltransferase from Haemophilus influenzae (strain PittEE).